The sequence spans 347 residues: UDP-3-O-acylglucosamine N-acyltransferase (347 aa).

H241 serves as the catalytic Proton acceptor.

Belongs to the transferase hexapeptide repeat family. LpxD subfamily. In terms of assembly, homotrimer.

It catalyses the reaction a UDP-3-O-[(3R)-3-hydroxyacyl]-alpha-D-glucosamine + a (3R)-hydroxyacyl-[ACP] = a UDP-2-N,3-O-bis[(3R)-3-hydroxyacyl]-alpha-D-glucosamine + holo-[ACP] + H(+). It participates in bacterial outer membrane biogenesis; LPS lipid A biosynthesis. Functionally, catalyzes the N-acylation of UDP-3-O-acylglucosamine using 3-hydroxyacyl-ACP as the acyl donor. Is involved in the biosynthesis of lipid A, a phosphorylated glycolipid that anchors the lipopolysaccharide to the outer membrane of the cell. In Neisseria gonorrhoeae (strain NCCP11945), this protein is UDP-3-O-acylglucosamine N-acyltransferase.